The following is an 87-amino-acid chain: uncharacterized protein (87 aa).

It belongs to the SF3B5 family.

This is an uncharacterized protein from Arabidopsis thaliana (Mouse-ear cress).